We begin with the raw amino-acid sequence, 394 residues long: Obg-like ATPase 1 (394 aa).

One can recognise an OBG-type G domain in the interval 21-285 (LKAGIVGLAN…MSPEDAEEEL (265 aa)). Position 30–35 (30–35 (NVGKST)) interacts with ATP. 2 residues coordinate Mg(2+): Ser34 and Thr55. Thr89 carries the phosphothreonine modification. Lys98 is covalently cross-linked (Glycyl lysine isopeptide (Lys-Gly) (interchain with G-Cter in ubiquitin)). Phosphoserine is present on residues Ser116 and Ser119. Leu233 is an ATP binding site. Residues 306-389 (DLISFFTCGP…EDGDIIYFRA (84 aa)) enclose the TGS domain.

The protein belongs to the TRAFAC class OBG-HflX-like GTPase superfamily. OBG GTPase family. YchF/OLA1 subfamily. Monomer. Interacts with the 26S proteasome subunit RPT6. Requires Mg(2+) as cofactor.

It localises to the cytoplasm. Its function is as follows. Hydrolyzes ATP, and can also hydrolyze GTP with lower efficiency. Has lower affinity for GTP. This Saccharomyces cerevisiae (strain ATCC 204508 / S288c) (Baker's yeast) protein is Obg-like ATPase 1.